A 432-amino-acid chain; its full sequence is Isocitrate lyase (432 aa).

The segment at 1 to 24 is disordered; it reads MSNVGKPRTAQEIQQDWDTNPRWN. Positions 11–22 are enriched in polar residues; sequence QEIQQDWDTNPR. 93 to 95 serves as a coordination point for substrate; sequence SGW. Asp-155 provides a ligand contact to Mg(2+). The Proton acceptor role is filled by Cys-193. Substrate is bound by residues 194–195, Arg-230, 315–319, and Thr-349; these read GH and NCSPS.

Belongs to the isocitrate lyase/PEP mutase superfamily. Isocitrate lyase family. In terms of assembly, homotetramer. Mg(2+) is required as a cofactor.

It catalyses the reaction D-threo-isocitrate = glyoxylate + succinate. It functions in the pathway carbohydrate metabolism; glyoxylate cycle; (S)-malate from isocitrate: step 1/2. Inhibited by 3-phosphoglycerate, 6-phosphogluconate, phosphoenolpyruvate (PEP), fructose 1,6-bisphosphate, glycolate, oxalate, and itaconate. In terms of biological role, involved in the metabolic adaptation in response to environmental changes. Catalyzes the reversible formation of succinate and glyoxylate from isocitrate, a key step of the glyoxylate cycle, which operates as an anaplerotic route for replenishing the tricarboxylic acid cycle during growth on fatty acid substrates. The protein is Isocitrate lyase of Corynebacterium glutamicum (strain ATCC 13032 / DSM 20300 / JCM 1318 / BCRC 11384 / CCUG 27702 / LMG 3730 / NBRC 12168 / NCIMB 10025 / NRRL B-2784 / 534).